The sequence spans 41 residues: Large ribosomal subunit protein bL36 (41 aa).

Belongs to the bacterial ribosomal protein bL36 family.

This Nitrobacter winogradskyi (strain ATCC 25391 / DSM 10237 / CIP 104748 / NCIMB 11846 / Nb-255) protein is Large ribosomal subunit protein bL36.